Reading from the N-terminus, the 335-residue chain is 2-acylglycerol O-acyltransferase 2-B (335 aa).

2 helical membrane-spanning segments follow: residues 24 to 44 (WAVSFLAMAQCCIALYILLLF) and 104 to 124 (YIMGFHPHGVLVVGAFGNFCT). The N-linked (GlcNAc...) asparagine glycan is linked to N206.

It belongs to the diacylglycerol acyltransferase family.

The protein localises to the endoplasmic reticulum membrane. It is found in the cytoplasm. It localises to the perinuclear region. The catalysed reaction is a 2-acylglycerol + an acyl-CoA = a 1,2-diacylglycerol + CoA. It catalyses the reaction a 2-acylglycerol + an acyl-CoA = a 1,2-diacyl-sn-glycerol + CoA. It carries out the reaction a 2-acylglycerol + an acyl-CoA = a 2,3-diacyl-sn-glycerol + CoA. The enzyme catalyses a 1-acylglycerol + an acyl-CoA = a 1,2-diacylglycerol + CoA. The catalysed reaction is a 1-acylglycerol + an acyl-CoA = a 1,3-diacylglycerol + CoA. It catalyses the reaction 1-O-alkylglycerol + an acyl-CoA = 1-O-alkyl-3-acylglycerol + CoA. It carries out the reaction an acyl-CoA + a 1,2-diacyl-sn-glycerol = a triacyl-sn-glycerol + CoA. The protein operates within glycerolipid metabolism; triacylglycerol biosynthesis. Its function is as follows. Catalyzes the formation of diacylglycerol from 2-monoacylglycerol and fatty acyl-CoA. Functionally, involved in glycerolipid synthesis and lipid metabolism. Catalyzes the formation of diacylglycerol, the precursor of triacylglycerol, by transferring the acyl chain of a fatty acyl-CoA to a monoacylglycerol. Plays a central role in absorption of dietary fat in the small intestine by catalyzing the resynthesis of triacylglycerol in enterocytes. Has a preference toward monoacylglycerols containing unsaturated fatty acids in an order of C18:3 &gt; C18:2 &gt; C18:1 &gt; C18:0 at sn-2. Able to use 1-monoalkylglycerol (1-MAkG, 1-O-alkylglycerol) as an acyl acceptor for the synthesis of monoalkyl-monoacylglycerol (MAMAG, 1-O-alkyl-3-acylglycerol or 1-O-alkyl-2-acylglycerol) and subsequently, with lower efficiency, may add another acyl chain producing monoalkyl-diacylglycerol (MADAG, 1-O-alkyl-2,3-diacylglycerol). Possesses weak but significant activity with diacylglycerol as substrate, producing triacylglycerol (triacyl-sn-glycerol). The sequence is that of 2-acylglycerol O-acyltransferase 2-B (mogat2-b) from Xenopus laevis (African clawed frog).